Consider the following 367-residue polypeptide: Anhydro-N-acetylmuramic acid kinase (367 aa).

Residue 11-18 participates in ATP binding; sequence GTSLDGVD.

Belongs to the anhydro-N-acetylmuramic acid kinase family.

It carries out the reaction 1,6-anhydro-N-acetyl-beta-muramate + ATP + H2O = N-acetyl-D-muramate 6-phosphate + ADP + H(+). Its pathway is amino-sugar metabolism; 1,6-anhydro-N-acetylmuramate degradation. It functions in the pathway cell wall biogenesis; peptidoglycan recycling. In terms of biological role, catalyzes the specific phosphorylation of 1,6-anhydro-N-acetylmuramic acid (anhMurNAc) with the simultaneous cleavage of the 1,6-anhydro ring, generating MurNAc-6-P. Is required for the utilization of anhMurNAc either imported from the medium or derived from its own cell wall murein, and thus plays a role in cell wall recycling. The chain is Anhydro-N-acetylmuramic acid kinase from Chromobacterium violaceum (strain ATCC 12472 / DSM 30191 / JCM 1249 / CCUG 213 / NBRC 12614 / NCIMB 9131 / NCTC 9757 / MK).